Here is a 613-residue protein sequence, read N- to C-terminus: Arginine--tRNA ligase (613 aa).

The 'HIGH' region motif lies at 123–133 (PNVAKPMHVGH).

This sequence belongs to the class-I aminoacyl-tRNA synthetase family. As to quaternary structure, monomer.

The protein resides in the cytoplasm. The catalysed reaction is tRNA(Arg) + L-arginine + ATP = L-arginyl-tRNA(Arg) + AMP + diphosphate. This is Arginine--tRNA ligase from Caulobacter sp. (strain K31).